A 458-amino-acid chain; its full sequence is Putative long chain fatty acid-CoA ligase VraA (458 aa).

It belongs to the ATP-dependent AMP-binding enzyme family.

This Staphylococcus aureus (strain Mu3 / ATCC 700698) protein is Putative long chain fatty acid-CoA ligase VraA (vraA).